The sequence spans 86 residues: Small ribosomal subunit protein bS16 (86 aa).

This sequence belongs to the bacterial ribosomal protein bS16 family.

The chain is Small ribosomal subunit protein bS16 from Bordetella avium (strain 197N).